The chain runs to 235 residues: Class A basic helix-loop-helix protein 9 (235 aa).

Disordered regions lie at residues 1–69 (MLRG…RRMA) and 132–235 (GHLE…HPRS). Residues 55–67 (RRRARPVRSKARR) are compositionally biased toward basic residues. The bHLH domain occupies 65–117 (ARRMAANVRERKRILDYNEAFNALRRALRHDLGGKRLSKIATLRRAIHRIAAL).

In terms of assembly, heterodimer. Efficient DNA binding requires dimerization with another bHLH protein. Interacts with TCF3, TCF4, and TCF12.

It is found in the nucleus. It localises to the cytoplasm. In terms of biological role, transcription factor, which play a role in limb development. Is an essential player in the regulatory network governing transcription of genes implicated in limb morphogenesis. The sequence is that of Class A basic helix-loop-helix protein 9 (BHLHA9) from Homo sapiens (Human).